The sequence spans 223 residues: DNA mismatch repair protein MutH (223 aa).

The protein belongs to the MutH family.

It localises to the cytoplasm. Functionally, sequence-specific endonuclease that cleaves unmethylated GATC sequences. It is involved in DNA mismatch repair. In Shewanella sp. (strain MR-7), this protein is DNA mismatch repair protein MutH.